Here is a 1361-residue protein sequence, read N- to C-terminus: DNA-directed RNA polymerase subunit beta (1361 aa).

It belongs to the RNA polymerase beta chain family. As to quaternary structure, the RNAP catalytic core consists of 2 alpha, 1 beta, 1 beta' and 1 omega subunit. When a sigma factor is associated with the core the holoenzyme is formed, which can initiate transcription.

It carries out the reaction RNA(n) + a ribonucleoside 5'-triphosphate = RNA(n+1) + diphosphate. Its function is as follows. DNA-dependent RNA polymerase catalyzes the transcription of DNA into RNA using the four ribonucleoside triphosphates as substrates. The protein is DNA-directed RNA polymerase subunit beta of Saccharophagus degradans (strain 2-40 / ATCC 43961 / DSM 17024).